The primary structure comprises 514 residues: Zinc finger and BTB domain-containing protein 2 (514 aa).

The 66-residue stretch at 24–89 (CDCTVAIGDV…MYTGKMAPQL (66 aa)) folds into the BTB domain. Residues lysine 147 and lysine 154 each participate in a glycyl lysine isopeptide (Lys-Gly) (interchain with G-Cter in SUMO2) cross-link. Residues 149-231 (ASAPEKLGRD…LEASSSDEQP (83 aa)) are disordered. Composition is skewed to polar residues over residues 161 to 200 (PQTSRISQEQVPEASQLSQLTSNLAQVNRTNMTPSDPLQT) and 222 to 231 (LEASSSDEQP). The C2H2-type 1 zinc-finger motif lies at 254 to 276 (YACHLCGRRFTLRSSLREHLQIH). Serine 341 is modified (phosphoserine). Residue lysine 362 forms a Glycyl lysine isopeptide (Lys-Gly) (interchain with G-Cter in SUMO2) linkage. A C2H2-type 2 zinc finger spans residues 363–385 (YECTICGRKFIQKSHWREHMYIH). The segment at 390–410 (FKCSTCDKSFCRANQAARHVC) adopts a C2H2-type 3; atypical zinc-finger fold. The C2H2-type 4; atypical zinc finger occupies 448–468 (YKCNLCDKTFSTPNEVVKHSC). Residues lysine 465, lysine 505, and lysine 506 each participate in a glycyl lysine isopeptide (Lys-Gly) (interchain with G-Cter in SUMO2) cross-link.

It localises to the nucleus. Functionally, may be involved in transcriptional regulation. The polypeptide is Zinc finger and BTB domain-containing protein 2 (ZBTB2) (Homo sapiens (Human)).